A 251-amino-acid polypeptide reads, in one-letter code: Pantothenate synthetase (251 aa).

28–35 (MGALHTGH) lines the ATP pocket. The Proton donor role is filled by H35. A (R)-pantoate-binding site is contributed by Q59. Residue Q59 participates in beta-alanine binding. Residue 145 to 148 (GEKD) coordinates ATP. Q151 contributes to the (R)-pantoate binding site. Residues V174 and 182-185 (KSSR) contribute to the ATP site.

The protein belongs to the pantothenate synthetase family. Homodimer.

Its subcellular location is the cytoplasm. It catalyses the reaction (R)-pantoate + beta-alanine + ATP = (R)-pantothenate + AMP + diphosphate + H(+). It participates in cofactor biosynthesis; (R)-pantothenate biosynthesis; (R)-pantothenate from (R)-pantoate and beta-alanine: step 1/1. Functionally, catalyzes the condensation of pantoate with beta-alanine in an ATP-dependent reaction via a pantoyl-adenylate intermediate. This is Pantothenate synthetase from Bdellovibrio bacteriovorus (strain ATCC 15356 / DSM 50701 / NCIMB 9529 / HD100).